A 466-amino-acid chain; its full sequence is tRNA-2-methylthio-N(6)-dimethylallyladenosine synthase (466 aa).

The MTTase N-terminal domain occupies 22–139 (RRYYVWTVGC…VVALAPNPIY (118 aa)). Cysteine 31, cysteine 67, cysteine 101, cysteine 166, cysteine 170, and cysteine 173 together coordinate [4Fe-4S] cluster. A Radical SAM core domain is found at 152–386 (SHPPVSVHVP…EQLQEQIATE (235 aa)). The region spanning 389-449 (ARFLGQTVEV…PWSLQGVPQL (61 aa)) is the TRAM domain.

The protein belongs to the methylthiotransferase family. MiaB subfamily. Monomer. [4Fe-4S] cluster serves as cofactor.

It localises to the cytoplasm. It catalyses the reaction N(6)-dimethylallyladenosine(37) in tRNA + (sulfur carrier)-SH + AH2 + 2 S-adenosyl-L-methionine = 2-methylsulfanyl-N(6)-dimethylallyladenosine(37) in tRNA + (sulfur carrier)-H + 5'-deoxyadenosine + L-methionine + A + S-adenosyl-L-homocysteine + 2 H(+). Its function is as follows. Catalyzes the methylthiolation of N6-(dimethylallyl)adenosine (i(6)A), leading to the formation of 2-methylthio-N6-(dimethylallyl)adenosine (ms(2)i(6)A) at position 37 in tRNAs that read codons beginning with uridine. This is tRNA-2-methylthio-N(6)-dimethylallyladenosine synthase from Chloroflexus aurantiacus (strain ATCC 29366 / DSM 635 / J-10-fl).